The primary structure comprises 127 residues: uncharacterized protein (127 aa).

The residue at position 30 (threonine 30) is a Phosphothreonine. Positions 51–75 (APTYEQVLYPPASQKKTSNSTSEES) are disordered. The residue at position 63 (serine 63) is a Phosphoserine.

This is an uncharacterized protein from Mus musculus (Mouse).